The following is a 333-amino-acid chain: NADH-quinone oxidoreductase subunit H (333 aa).

8 helical membrane-spanning segments follow: residues 15–35 (FFIFFGLAVLLLFAVLGFVTY), 88–108 (FILAPVIAFAPAFMVLAVIPF), 117–137 (IGVGLLYYIAVSGITTIGVVT), 159–179 (ISYEIPLVMSVIGIVLLAGSL), 191–211 (VWYIFVQPIGFVVFLIAAVAE), 239–259 (WAFFMLSEYVYFFGMASLITV), 274–296 (IPGAVWFALKFSSVVFLLIWFRV), and 313–333 (VLLPIALANIFLTALIKELFF).

The protein belongs to the complex I subunit 1 family. As to quaternary structure, NDH-1 is composed of 14 different subunits. Subunits NuoA, H, J, K, L, M, N constitute the membrane sector of the complex.

It is found in the cell membrane. It carries out the reaction a quinone + NADH + 5 H(+)(in) = a quinol + NAD(+) + 4 H(+)(out). Functionally, NDH-1 shuttles electrons from NADH, via FMN and iron-sulfur (Fe-S) centers, to quinones in the respiratory chain. The immediate electron acceptor for the enzyme in this species is believed to be ubiquinone. Couples the redox reaction to proton translocation (for every two electrons transferred, four hydrogen ions are translocated across the cytoplasmic membrane), and thus conserves the redox energy in a proton gradient. This subunit may bind ubiquinone. The chain is NADH-quinone oxidoreductase subunit H from Bacillus anthracis (strain A0248).